We begin with the raw amino-acid sequence, 318 residues long: Bifunctional protein FolD 3 (318 aa).

Residues 173-175 and Ile242 contribute to the NADP(+) site; that span reads GRS.

It belongs to the tetrahydrofolate dehydrogenase/cyclohydrolase family. Homodimer.

The catalysed reaction is (6R)-5,10-methylene-5,6,7,8-tetrahydrofolate + NADP(+) = (6R)-5,10-methenyltetrahydrofolate + NADPH. It carries out the reaction (6R)-5,10-methenyltetrahydrofolate + H2O = (6R)-10-formyltetrahydrofolate + H(+). Its pathway is one-carbon metabolism; tetrahydrofolate interconversion. Functionally, catalyzes the oxidation of 5,10-methylenetetrahydrofolate to 5,10-methenyltetrahydrofolate and then the hydrolysis of 5,10-methenyltetrahydrofolate to 10-formyltetrahydrofolate. The chain is Bifunctional protein FolD 3 from Rubrobacter xylanophilus (strain DSM 9941 / JCM 11954 / NBRC 16129 / PRD-1).